Here is a 447-residue protein sequence, read N- to C-terminus: Phospholipase A(1) DAD1, chloroplastic (447 aa).

A chloroplast-targeting transit peptide spans 1 to 46 (MRFSLSPVRPHSVVVPSLPKQDVVSYISGTTSNRQCRCVLTLPSPS). Positions 293–297 (GHSLG) match the GXSXG motif. The active-site Acyl-ester intermediate is the Ser295. Catalysis depends on charge relay system residues Asp352 and His418.

It belongs to the AB hydrolase superfamily. Lipase family. Expressed in flower buds, but not in leaves or roots. Restricted to the stamen filaments immediately before flower opening.

The protein resides in the plastid. Its subcellular location is the chloroplast. It catalyses the reaction a 1,2-diacyl-sn-glycero-3-phosphocholine + H2O = a 2-acyl-sn-glycero-3-phosphocholine + a fatty acid + H(+). It carries out the reaction 1-hexadecanoyl-2-(9Z,12Z-octadecadienoyl)-sn-glycero-3-phosphocholine + H2O = 2-(9Z,12Z-octadecadienoyl)-sn-glycero-3-phosphocholine + hexadecanoate + H(+). Functionally, sn-1-specific phospholipase that releases free fatty acids from phospholipids. Low activity on galactolipids and triacylglycerols. Catalyzes the initial step of jasmonic acid biosynthesis. Not essential for jasmonate biosynthesis after wounding or upon pathogen infection. This chain is Phospholipase A(1) DAD1, chloroplastic, found in Arabidopsis thaliana (Mouse-ear cress).